The sequence spans 352 residues: Phosphoribosylformylglycinamidine cyclo-ligase (352 aa).

The protein belongs to the AIR synthase family.

The protein resides in the cytoplasm. The catalysed reaction is 2-formamido-N(1)-(5-O-phospho-beta-D-ribosyl)acetamidine + ATP = 5-amino-1-(5-phospho-beta-D-ribosyl)imidazole + ADP + phosphate + H(+). It functions in the pathway purine metabolism; IMP biosynthesis via de novo pathway; 5-amino-1-(5-phospho-D-ribosyl)imidazole from N(2)-formyl-N(1)-(5-phospho-D-ribosyl)glycinamide: step 2/2. The protein is Phosphoribosylformylglycinamidine cyclo-ligase of Saccharophagus degradans (strain 2-40 / ATCC 43961 / DSM 17024).